The following is a 257-amino-acid chain: UPF0246 protein Spro_0686 (257 aa).

Belongs to the UPF0246 family.

This chain is UPF0246 protein Spro_0686, found in Serratia proteamaculans (strain 568).